The primary structure comprises 400 residues: Diphosphomevalonate decarboxylase (400 aa).

Residues 19-22, arginine 75, 154-159, and threonine 210 each bind (R)-5-diphosphomevalonate; these read YWGK and SGSACR. The disordered stretch occupies residues 381–400; sequence DGPRTLGPEEALLSPDGLPK.

The protein belongs to the diphosphomevalonate decarboxylase family.

It carries out the reaction (R)-5-diphosphomevalonate + ATP = isopentenyl diphosphate + ADP + phosphate + CO2. It participates in isoprenoid biosynthesis; isopentenyl diphosphate biosynthesis via mevalonate pathway; isopentenyl diphosphate from (R)-mevalonate: step 3/3. In terms of biological role, diphosphomevalonate decarboxylase; part of the second module of ergosterol biosynthesis pathway that includes the middle steps of the pathway. The second module involves the formation of farnesyl diphosphate, which is also an important intermediate in the biosynthesis of ubiquinone, dolichol, heme and prenylated proteins. This module also plays a key role in the biosynthesis of triterpenes such as ganoderic acids (GA), a group of highly oxygenated lanostane-type triterpenoids which are well recognized as a main group of unique bioactive compounds in the medicinal mushroom Ganoderma lucidum. Activity by the mevalonate kinase first converts mevalonate into 5-phosphomevalonate. 5-phosphomevalonate is then further converted to 5-diphosphomevalonate by the phosphomevalonate kinase. The diphosphomevalonate decarboxylase MVD then produces isopentenyl diphosphate. The isopentenyl-diphosphate delta-isomerase then catalyzes the 1,3-allylic rearrangement of the homoallylic substrate isopentenyl (IPP) to its highly electrophilic allylic isomer, dimethylallyl diphosphate (DMAPP). Finally the farnesyl diphosphate synthase FPS catalyzes the sequential condensation of isopentenyl pyrophosphate with dimethylallyl pyrophosphate, and then with the resultant geranylpyrophosphate to the ultimate product farnesyl pyrophosphate. This is Diphosphomevalonate decarboxylase from Ganoderma lucidum (Ling zhi medicinal fungus).